An 86-amino-acid polypeptide reads, in one-letter code: Gas vesicle protein M (86 aa).

The protein belongs to the gas vesicle GvpA family. As to quaternary structure, gvpF to GvpM interact with each other in vitro, and may form multi-subunit complex(es). Might interact with GvpA.

It localises to the gas vesicle. Functionally, proteins GvpF to GvpM might be involved in nucleating gas vesicle formation. A minor component of the gas vesicle. Gas vesicles are small, hollow, gas filled protein structures found in some microorganisms. They allow positioning of halobacteria at the optimal depth for growth in the poorly aerated, shallow brine pools of their habitat. Its function is as follows. Expression of a 9.5 kb mc-vac DNA fragment containing 2 divergently transcribed regions (gvpD-gvpE-gvpF-gvpG-gvpH-gvpI-gvpJ-gvpK-gvpL-gvpM and gvpA-gvpC-gvpN-gvpO) allows H.volcanii to produce gas vesicles. This Haloferax mediterranei (strain ATCC 33500 / DSM 1411 / JCM 8866 / NBRC 14739 / NCIMB 2177 / R-4) (Halobacterium mediterranei) protein is Gas vesicle protein M.